Consider the following 271-residue polypeptide: Probable iron transport system membrane protein HI_0359 (271 aa).

Helical transmembrane passes span 17-37 (ALLT…YLVL), 55-75 (IVLA…SGIF), 93-113 (TAMG…FTKI), 131-151 (SHQE…LIVF), 168-188 (VAGL…ALTI), 194-214 (VVGV…ALTL), 221-241 (MLWV…ILSY), and 245-265 (ASTG…ALAY).

Belongs to the ABC-3 integral membrane protein family.

The protein resides in the cell inner membrane. Functionally, part of an ATP-driven transport system HI_0359/HI_0360/HI_0361/HI_0362 for iron. This is Probable iron transport system membrane protein HI_0359 from Haemophilus influenzae (strain ATCC 51907 / DSM 11121 / KW20 / Rd).